Here is a 166-residue protein sequence, read N- to C-terminus: Heavy metal-associated isoprenylated plant protein 45 (166 aa).

Residues 15-78 enclose the HMA domain; it reads LSIVELLVDM…MVKRTGRTAE (64 aa). A metal cation is bound by residues cysteine 26 and cysteine 29. Cysteine 163 is modified (cysteine methyl ester). A lipid anchor (S-farnesyl cysteine) is attached at cysteine 163. Residues 164-166 constitute a propeptide, removed in mature form; sequence TIM.

This sequence belongs to the HIPP family.

Its function is as follows. Heavy-metal-binding protein. This is Heavy metal-associated isoprenylated plant protein 45 from Arabidopsis thaliana (Mouse-ear cress).